The sequence spans 264 residues: General transcription factor IIF subunit 2 (264 aa).

It belongs to the TFIIF beta subunit family. In terms of assembly, heterodimer of an alpha and a beta subunit.

The protein resides in the nucleus. TFIIF is a general transcription initiation factor that binds to RNA polymerase II and helps to recruit it to the initiation complex in collaboration with TFIIB. This is General transcription factor IIF subunit 2 (gtf2f2) from Xenopus laevis (African clawed frog).